We begin with the raw amino-acid sequence, 472 residues long: ATP synthase subunit beta (472 aa).

157-164 (GGAGVGKT) provides a ligand contact to ATP.

This sequence belongs to the ATPase alpha/beta chains family. As to quaternary structure, F-type ATPases have 2 components, CF(1) - the catalytic core - and CF(0) - the membrane proton channel. CF(1) has five subunits: alpha(3), beta(3), gamma(1), delta(1), epsilon(1). CF(0) has three main subunits: a(1), b(2) and c(9-12). The alpha and beta chains form an alternating ring which encloses part of the gamma chain. CF(1) is attached to CF(0) by a central stalk formed by the gamma and epsilon chains, while a peripheral stalk is formed by the delta and b chains.

It is found in the cell membrane. The enzyme catalyses ATP + H2O + 4 H(+)(in) = ADP + phosphate + 5 H(+)(out). Functionally, produces ATP from ADP in the presence of a proton gradient across the membrane. The catalytic sites are hosted primarily by the beta subunits. This chain is ATP synthase subunit beta, found in Desulforudis audaxviator (strain MP104C).